We begin with the raw amino-acid sequence, 309 residues long: Thiamine-monophosphate kinase (309 aa).

Asp-25, Thr-39, Ser-40, and Asp-41 together coordinate Mg(2+). Asp-48 provides a ligand contact to substrate. Mg(2+) contacts are provided by Asp-69 and Asp-117. ATP-binding positions include 116–117 and Arg-140; that span reads GD. Residue Asp-201 coordinates Mg(2+). Position 203 (Ser-203) interacts with ATP. Asp-204 lines the Mg(2+) pocket. The substrate site is built by Glu-250 and Trp-298.

Belongs to the thiamine-monophosphate kinase family.

The catalysed reaction is thiamine phosphate + ATP = thiamine diphosphate + ADP. It functions in the pathway cofactor biosynthesis; thiamine diphosphate biosynthesis; thiamine diphosphate from thiamine phosphate: step 1/1. Catalyzes the ATP-dependent phosphorylation of thiamine-monophosphate (TMP) to form thiamine-pyrophosphate (TPP), the active form of vitamin B1. This is Thiamine-monophosphate kinase from Pyrococcus horikoshii (strain ATCC 700860 / DSM 12428 / JCM 9974 / NBRC 100139 / OT-3).